The sequence spans 369 residues: Terpene cyclase DEP1 (369 aa).

Transmembrane regions (helical) follow at residues 9-29 (FFYLSALGIWGLWVYAFFNGM), 82-102 (LLFFDVNYVVACANLWVLIES), 118-138 (AMVLCNANGAAIVLPLYLYLV), 157-177 (ALLVSTVVILLQPLLIFVPAW), 190-210 (IALFQVAPIGVSVFHLGLASI), 234-254 (LVLAGTVAAAVHSYTVVGALI), 298-318 (LFSQWDWIVVALTSVLYSHLL), and 342-362 (LVYLTVATIILGPGGAASFAL).

Belongs to the membrane-bound ascI terpene cyclase family.

Its subcellular location is the membrane. It participates in polyketide biosynthesis. In terms of biological role, part of the gene cluster that mediates the biosynthesis of depudecin, a highly oxidized eleven-carbon linear polyketide that acts as a histone deacetylase (HDAC) inhibitor and makes a small contribution to pathogenesis. The reducing polyketide synthase DEP5 is the central enzyme in depudecin biosynthesis by yielding the backbone polyketide chain. The monooxygenases DEP2 and DEP4, as well as the uncharacterized protein DEP1, then act as tailoring enzymes to modify the intermediate polyketide chain into depudecin. The polypeptide is Terpene cyclase DEP1 (Alternaria brassicicola (Dark leaf spot agent)).